The sequence spans 352 residues: Pejvakin (352 aa).

This sequence belongs to the gasdermin family. In terms of assembly, interacts with MAP1LC3B; interaction is direct. Interacts with IQGAP1. Interacts with ROCK2. Interacts with TRIOBP.

Its subcellular location is the peroxisome membrane. It is found in the cell projection. The protein resides in the cilium. In terms of biological role, peroxisome-associated protein required to protect auditory hair cells against noise-induced damage. Acts by regulating noise-induced peroxisome proliferation in auditory hair cells and neurons, and promoting autophagic degradation of damaged peroxisomes (pexophagy). Noise overexposure increases reactive oxygen species (ROS) levels, causing oxidative damage to auditory hair cells and resulting in hearing loss. PJVK acts as a ROS sensor that recruits the autophagy machinery to trigger pexophagy of peroxisomes damaged by oxidative stress. In addition to pexophagy, also required to promote peroxisome proliferation in response to sound overstimulation. This Homo sapiens (Human) protein is Pejvakin.